Consider the following 215-residue polypeptide: Sodium channel regulatory subunit beta-3 (215 aa).

The first 24 residues, 1 to 24, serve as a signal peptide directing secretion; that stretch reads MPAFNRLLPLASLVLIYWVRVCFP. Residues 25 to 138 enclose the Ig-like C2-type domain; the sequence is VCVEVPSETE…EAHRPFVKTT (114 aa). Over 25 to 156 the chain is Extracellular; sequence VCVEVPSETE…EEAGEDFTSV (132 aa). Cystine bridges form between cysteine 26–cysteine 48 and cysteine 45–cysteine 120. N-linked (GlcNAc...) asparagine glycans are attached at residues asparagine 95, asparagine 109, asparagine 113, and asparagine 121. A helical membrane pass occupies residues 157–178; it reads VSEIMMYILLVFLTLWLFIEMI. The Cytoplasmic segment spans residues 179–215; it reads YCYRKVSKAEEAAQENASDYLAIPSENKENSVVPVEE.

The protein belongs to the sodium channel auxiliary subunit SCN3B (TC 8.A.17) family. In terms of assembly, a voltage-gated sodium (Nav) channel consists of an ion-conducting pore-forming alpha subunit functional on its own that is regulated by one or more beta subunits. Forms homodimers and homotrimers. SCN3B is non-covalently associated with alpha subunits and induces the formation of alpha subunit oligomers, including trimers. Interacts with SCN5A/Nav1.5; regulatory subunit of SCN5A/Nav1.5. Interacts with SCN7A/Nav2.1; probable regulatory subunit of SCN7A/Nav2.1. Interacts with SCN10A; regulatory subunit of SCN10A/Nav1.8. Interacts with NFASC; probably involved in targeting the sodium channels to the nodes of Ranvier. Post-translationally, intramolecular disulfide bonds favor the voltage-gated sodium channel oligomeric complex assembly. N-glycosylated. Expressed broadly in neurons in the central and peripheral nervous systems, but not in glia and most non-neuronal cells. Weak detection in lung and adrenal gland.

The protein resides in the cell membrane. Its function is as follows. Regulatory subunit of multiple voltage-gated sodium (Nav) channels directly mediating the depolarization of excitable membranes. Navs, also called VGSCs (voltage-gated sodium channels) or VDSCs (voltage-dependent sodium channels), operate by switching between closed and open conformations depending on the voltage difference across the membrane. In the open conformation they allow Na(+) ions to selectively pass through the pore, along their electrochemical gradient. The influx of Na+ ions provokes membrane depolarization, initiating the propagation of electrical signals throughout cells and tissues. The accessory beta subunits participate in localization and functional modulation of the Nav channels. Voltage-gated sodium channels regulatory subunit that modulates channel gating kinetics. Modulates the activity of SCN2A/Nav1.2, causing a hyperpolarizing shift in the voltage-dependence of inactivation and increasing the fraction of channels operating in the fast gating mode. Also able to induce unique persistent SCN2A/Nav1.2-mediated sodium currents. Could modulate the activity of SCN10A/Nav1.8. In Rattus norvegicus (Rat), this protein is Sodium channel regulatory subunit beta-3.